A 258-amino-acid polypeptide reads, in one-letter code: Imidazole glycerol phosphate synthase subunit HisF (258 aa).

Active-site residues include Asp11 and Asp130.

Belongs to the HisA/HisF family. As to quaternary structure, heterodimer of HisH and HisF.

It localises to the cytoplasm. The enzyme catalyses 5-[(5-phospho-1-deoxy-D-ribulos-1-ylimino)methylamino]-1-(5-phospho-beta-D-ribosyl)imidazole-4-carboxamide + L-glutamine = D-erythro-1-(imidazol-4-yl)glycerol 3-phosphate + 5-amino-1-(5-phospho-beta-D-ribosyl)imidazole-4-carboxamide + L-glutamate + H(+). The protein operates within amino-acid biosynthesis; L-histidine biosynthesis; L-histidine from 5-phospho-alpha-D-ribose 1-diphosphate: step 5/9. Its function is as follows. IGPS catalyzes the conversion of PRFAR and glutamine to IGP, AICAR and glutamate. The HisF subunit catalyzes the cyclization activity that produces IGP and AICAR from PRFAR using the ammonia provided by the HisH subunit. This Salmonella agona (strain SL483) protein is Imidazole glycerol phosphate synthase subunit HisF.